A 437-amino-acid chain; its full sequence is Probable N-acetylmuramidase (437 aa).

Residues 1 to 57 (MPVSRVKVKNRHLKKKTKKPLAFYKPTTKFVGAVLIAGTLTTTHELLLQQTSPMVQA) form the signal peptide. 3 disordered regions span residues 217-244 (SSAG…SSTT), 291-319 (SSTN…ASQT), and 367-392 (ATSN…NSNA). The 44-residue stretch at 243–286 (TTYTVKSGDTLWGISQRYGISVAQIQSANNLKSTIIYIGQKLLL) folds into the LysM 1 domain. Residues 291-317 (SSTNSGGSNNSASTTPTTSVTPAKPAS) show a composition bias toward low complexity. Residues 319-362 (TSVKVKSGDTLWALSVKYKTSIAQLKSWNHLSSDTIYIGQNLIV) form the LysM 2 domain. The LysM 3 domain occupies 393–436 (SIHKVVKGDTLWGLSQKSGSPIASIKAWNHLSSDTILIGQYLRI).

Belongs to the glycosyl hydrolase 73 family.

The protein resides in the secreted. The catalysed reaction is Hydrolysis of (1-&gt;4)-beta-linkages between N-acetylmuramic acid and N-acetyl-D-glucosamine residues in a peptidoglycan and between N-acetyl-D-glucosamine residues in chitodextrins.. Its function is as follows. Hydrolyzes the cell wall of L.lactis and M.lysodeikticus. Required for cell separation during growth. The protein is Probable N-acetylmuramidase (acmA) of Lactococcus lactis subsp. cremoris (Streptococcus cremoris).